Reading from the N-terminus, the 462-residue chain is ATP synthase subunit beta (462 aa).

ATP is bound at residue 151–158 (GGAGVGKT).

Belongs to the ATPase alpha/beta chains family. As to quaternary structure, F-type ATPases have 2 components, CF(1) - the catalytic core - and CF(0) - the membrane proton channel. CF(1) has five subunits: alpha(3), beta(3), gamma(1), delta(1), epsilon(1). CF(0) has three main subunits: a(1), b(2) and c(9-12). The alpha and beta chains form an alternating ring which encloses part of the gamma chain. CF(1) is attached to CF(0) by a central stalk formed by the gamma and epsilon chains, while a peripheral stalk is formed by the delta and b chains.

The protein resides in the cell inner membrane. It carries out the reaction ATP + H2O + 4 H(+)(in) = ADP + phosphate + 5 H(+)(out). Produces ATP from ADP in the presence of a proton gradient across the membrane. The catalytic sites are hosted primarily by the beta subunits. The polypeptide is ATP synthase subunit beta (Chlorobaculum parvum (strain DSM 263 / NCIMB 8327) (Chlorobium vibrioforme subsp. thiosulfatophilum)).